Here is a 473-residue protein sequence, read N- to C-terminus: Venom prothrombin activator vestarin-D1 (473 aa).

The first 20 residues, 1–20, serve as a signal peptide directing secretion; the sequence is MAPQLLLCLIQTFLWSLPEA. The propeptide occupies 21-40; the sequence is ESNVFLKSNVANRFLQRTKR. Positions 41–86 constitute a Gla domain; it reads ANSGFEEIYPANFERECVEERCSKEEAREVFEDDEKTEAFWTVYVD. A 4-carboxyglutamate mark is found at E46, E47, E54, E56, E59, E60, E65, E66, E69, E72, and E75. C57 and C62 are oxidised to a cystine. An EGF-like 1; calcium-binding domain is found at 86-122; sequence DGDQCLSNPCHYGGTCKDGIGSYTCTCLAGYEGKNCE. Disulfide bonds link C90–C101, C95–C110, C112–C121, C129–C140, C136–C149, C151–C164, C172–C335, C235–C240, C383–C397, and C408–C436. S92 carries an O-linked (Hex...) serine glycan. One can recognise an EGF-like 2 domain in the interval 129–164; sequence CRVDNGNCWHFCKPVQNDTQCSCAEGYRLGDNGFSC. Positions 182–228 are cleaved as a propeptide — activation peptide; the sequence is REASLPDFQTDFSDDYDAIDENNLIETVQSQSATLLKKSDNPNPDIR. Residues 229-460 form the Peptidase S1 domain; that stretch reads IVNGLDCKLG…FLPWIKTIMR (232 aa). The active-site Charge relay system is the H270. The N-linked (GlcNAc...) asparagine glycan is linked to N273. The active-site Charge relay system is D315. Catalysis depends on S412, which acts as the Charge relay system.

The protein belongs to the peptidase S1 family. Snake venom subfamily. As to quaternary structure, heterodimer of a light chain and a heavy chain; disulfide-linked. The vitamin K-dependent, enzymatic carboxylation of some glutamate residues allows the modified protein to bind calcium. As to expression, expressed by the venom gland.

It is found in the secreted. The enzyme catalyses Selective cleavage of Arg-|-Thr and then Arg-|-Ile bonds in prothrombin to form thrombin.. Snake prothrombin activator that attacks the hemostatic system of prey. This protein is functionally similar to blood coagulation factor Xa. This is Venom prothrombin activator vestarin-D1 from Demansia vestigiata (Lesser black whip snake).